The following is a 358-amino-acid chain: Trace amine-associated receptor 7d (358 aa).

The Extracellular segment spans residues 1 to 47 (MATGDDSFPWDQDSILSRDLFSATSTELCYENLNRSCVRSPYSPGPR). N34 carries an N-linked (GlcNAc...) asparagine glycan. Intrachain disulfides connect C37/C201 and C120/C205. A helical transmembrane segment spans residues 48–68 (LILYAVFGFGAVLAVCGNLLV). The Cytoplasmic portion of the chain corresponds to 69-83 (MTSILHFRQLHSPAN). The chain crosses the membrane as a helical span at residues 84 to 104 (FLVASLACADFLVGVMVMPFS). The Extracellular segment spans residues 105-121 (MVRSVEGCWYFGESYCK). The helical transmembrane segment at 122–143 (FHSCFEGSFCYSSLFHLCFISV) threads the bilayer. Residues 144–166 (DRYIAVSDPLTYPTRFTASVSGK) are Cytoplasmic-facing. Residues 167 to 187 (CITFSWLLSIIYSFSLLYTGA) form a helical membrane-spanning segment. At 188–212 (NDAGLEDLVSALTCVGGCQIAVNQT) the chain is on the extracellular side. N-linked (GlcNAc...) asparagine glycosylation occurs at N210. The helical transmembrane segment at 213–233 (WVFINFLLFLIPTLVMITVYS) threads the bilayer. Topologically, residues 234–274 (KIFLIAKQQAQNIEKMSKQTARASESYKDRVTKRERKAAKT) are cytoplasmic. The chain crosses the membrane as a helical span at residues 275–295 (LGIAVAAFLLSWLPYFIDSII). Topologically, residues 296-309 (DAFLGFITPTYVYE) are extracellular. A helical transmembrane segment spans residues 310 to 333 (ILVWIVYYNSAMNPLIYAFFYSWF). Residues 334 to 358 (RKAIKLIVSGKILRENSSTTNLFPE) lie on the Cytoplasmic side of the membrane.

Belongs to the G-protein coupled receptor 1 family. As to expression, specifically expressed in neurons of the olfactory epithelium.

The protein localises to the cell membrane. Its function is as follows. Olfactory receptor specific for trace amines, such as beta-phenylethylamine (beta-PEA). Trace amine compounds are enriched in animal body fluids and act on trace amine-associated receptors (TAARs) to elicit both intraspecific and interspecific innate behaviors. Ligand-binding causes a conformation change that triggers signaling via G(s)-class of G alpha proteins (GNAL or GNAS). The polypeptide is Trace amine-associated receptor 7d (Mus musculus (Mouse)).